The chain runs to 255 residues: 14-3-3 protein 5 (255 aa).

It belongs to the 14-3-3 family. Homodimer.

The protein is 14-3-3 protein 5 (TFT5) of Solanum lycopersicum (Tomato).